A 286-amino-acid polypeptide reads, in one-letter code: ATP synthase gamma chain (286 aa).

The protein belongs to the ATPase gamma chain family. In terms of assembly, F-type ATPases have 2 components, CF(1) - the catalytic core - and CF(0) - the membrane proton channel. CF(1) has five subunits: alpha(3), beta(3), gamma(1), delta(1), epsilon(1). CF(0) has three main subunits: a, b and c.

Its subcellular location is the cell membrane. Produces ATP from ADP in the presence of a proton gradient across the membrane. The gamma chain is believed to be important in regulating ATPase activity and the flow of protons through the CF(0) complex. The polypeptide is ATP synthase gamma chain (Mycoplasma mobile (strain ATCC 43663 / 163K / NCTC 11711) (Mesomycoplasma mobile)).